Here is a 37-residue protein sequence, read N- to C-terminus: Albumin-2 (37 aa).

One copy of the Hemopexin repeat lies at 6-37; the sequence is IANFSVLNXEAYLFINDKYVLLDYAPGTXNDK.

In terms of assembly, dimer. In terms of tissue distribution, expressed in seeds (at protein level).

It localises to the cytoplasm. The protein resides in the cytosol. Binds hemin and thiamine. The polypeptide is Albumin-2 (Lens culinaris (Lentil)).